Consider the following 250-residue polypeptide: Complement factor B-like protease (250 aa).

3 consecutive Sushi domains span residues 3 to 73 (TRCD…KCRA), 74 to 133 (VWCP…VCDD), and 136 to 193 (GDCP…QCRA). Intrachain disulfides connect cysteine 5–cysteine 44, cysteine 30–cysteine 71, cysteine 76–cysteine 118, cysteine 104–cysteine 131, cysteine 138–cysteine 178, and cysteine 164–cysteine 191. Asparagine 115 carries N-linked (GlcNAc...) asparagine glycosylation. A glycan (N-linked (GlcNAc...) asparagine) is linked at asparagine 221.

It belongs to the peptidase S1 family. In terms of tissue distribution, plasma.

It is found in the secreted. Functionally, required in both the classical and alternate pathways of the complement system. The chain is Complement factor B-like protease from Gallus gallus (Chicken).